The chain runs to 517 residues: Aldehyde dehydrogenase X, mitochondrial (517 aa).

Residues 1-17 (MLRFLAPRLLSLQGRTA) constitute a mitochondrion transit peptide. N6-acetyllysine is present on lysine 51. Residue lysine 52 is modified to N6-acetyllysine; alternate. Lysine 52 bears the N6-succinyllysine; alternate mark. Residue lysine 81 is modified to N6-succinyllysine. 262–267 (GSTEVG) contacts NAD(+). Glutamate 285 functions as the Proton acceptor in the catalytic mechanism. Cysteine 319 functions as the Nucleophile in the catalytic mechanism. Residues lysine 364, lysine 383, lysine 399, lysine 414, and lysine 426 each carry the N6-acetyllysine; alternate modification. Residues lysine 364, lysine 383, lysine 399, lysine 414, and lysine 426 each carry the N6-succinyllysine; alternate modification. N6-acetyllysine is present on lysine 429.

Belongs to the aldehyde dehydrogenase family. Homotetramer. As to expression, liver, testis and to a lesser extent in brain.

Its subcellular location is the mitochondrion matrix. The enzyme catalyses an aldehyde + NAD(+) + H2O = a carboxylate + NADH + 2 H(+). It functions in the pathway alcohol metabolism; ethanol degradation; acetate from ethanol: step 2/2. Its function is as follows. ALDHs play a major role in the detoxification of alcohol-derived acetaldehyde. They are involved in the metabolism of corticosteroids, biogenic amines, neurotransmitters, and lipid peroxidation. This Homo sapiens (Human) protein is Aldehyde dehydrogenase X, mitochondrial (ALDH1B1).